A 1371-amino-acid polypeptide reads, in one-letter code: DNA-directed RNA polymerase subunit beta (1371 aa).

The protein belongs to the RNA polymerase beta chain family. In terms of assembly, the RNAP catalytic core consists of 2 alpha, 1 beta, 1 beta' and 1 omega subunit. When a sigma factor is associated with the core the holoenzyme is formed, which can initiate transcription.

It carries out the reaction RNA(n) + a ribonucleoside 5'-triphosphate = RNA(n+1) + diphosphate. DNA-dependent RNA polymerase catalyzes the transcription of DNA into RNA using the four ribonucleoside triphosphates as substrates. The polypeptide is DNA-directed RNA polymerase subunit beta (Citrifermentans bemidjiense (strain ATCC BAA-1014 / DSM 16622 / JCM 12645 / Bem) (Geobacter bemidjiensis)).